Reading from the N-terminus, the 337-residue chain is Phytanoyl-CoA dioxygenase, peroxisomal (337 aa).

The transit peptide at 1–30 (MDRNRASARLTVLLRHLGCRSAGTIIAHHT) directs the protein to the peroxisome. N6-succinyllysine is present on residues Lys-59 and Lys-108. Residues Lys-120, Met-157, 175-177 (HQD), and Trp-193 contribute to the 2-oxoglutarate site. Fe cation contacts are provided by His-175 and Asp-177. An N6-succinyllysine modification is found at Lys-252. Residue His-264 coordinates Fe cation. Ser-266 and Arg-275 together coordinate 2-oxoglutarate.

Belongs to the PhyH family. As to quaternary structure, interacts with FKBP52 and PHYHIP. Fe cation serves as cofactor. L-ascorbate is required as a cofactor. Requires ATP as cofactor. It depends on Mg(2+) as a cofactor.

It localises to the peroxisome. The enzyme catalyses phytanoyl-CoA + 2-oxoglutarate + O2 = 2-hydroxyphytanoyl-CoA + succinate + CO2. It carries out the reaction 3-methylhexadecanoyl-CoA + 2-oxoglutarate + O2 = 2-hydroxy-3-methylhexadecanoyl-CoA + succinate + CO2. It catalyses the reaction hexadecanoyl-CoA + 2-oxoglutarate + O2 = 2-hydroxyhexadecanoyl-CoA + succinate + CO2. The catalysed reaction is octanoyl-CoA + 2-oxoglutarate + O2 = 2-hydroxyoctanoyl-CoA + succinate + CO2. The enzyme catalyses decanoyl-CoA + 2-oxoglutarate + O2 = 2-hydroxydecanoyl-CoA + succinate + CO2. It carries out the reaction 3-methylbutanoyl-CoA + 2-oxoglutarate + O2 = 2-hydroxy-3-methylbutanoyl-CoA + succinate + CO2. It catalyses the reaction heptadecanoyl-CoA + 2-oxoglutarate + O2 = 2-hydroxyheptadecanoyl-CoA + succinate + CO2. The catalysed reaction is eicosanoyl-CoA + 2-oxoglutarate + O2 = 2-hydroxyeicosanoyl-CoA + succinate + CO2. The enzyme catalyses octadecanoyl-CoA + 2-oxoglutarate + O2 = 2-hydroxyoctadecanoyl-CoA + succinate + CO2. It carries out the reaction dodecanoyl-CoA + 2-oxoglutarate + O2 = 2-hydroxydodecanoyl-CoA + succinate + CO2. It catalyses the reaction tetradecanoyl-CoA + 2-oxoglutarate + O2 = 2-hydroxytetradecanoyl-CoA + succinate + CO2. The catalysed reaction is hexanoyl-CoA + 2-oxoglutarate + O2 = 2-hydroxyhexanoyl-CoA + succinate + CO2. The enzyme catalyses butanoyl-CoA + 2-oxoglutarate + O2 = 2-hydroxybutanoyl-CoA + succinate + CO2. It carries out the reaction 3-methylnonanoyl-CoA + 2-oxoglutarate + O2 = 2-hydroxy-3-methylnonanoyl-CoA + succinate + CO2. It catalyses the reaction 3-methylundecanoyl-CoA + 2-oxoglutarate + O2 = 2-hydroxy-3-methylundecanoyl-CoA + succinate + CO2. The catalysed reaction is 3-methyldodecanoyl-CoA + 2-oxoglutarate + O2 = 2-hydroxy-3-methyldodecanoyl-CoA + succinate + CO2. Its pathway is lipid metabolism; fatty acid metabolism. Its function is as follows. Catalyzes the 2-hydroxylation of not only racemic phytanoyl-CoA and the isomers of 3-methylhexadecanoyl-CoA, but also a variety of other mono- branched 3-methylacyl-CoA esters (with a chain length of at least seven carbon atoms) and straight-chain acyl-CoA esters (with a chain length longer than four carbon atoms). Does not hydroxylate long and very long straight chain acyl-CoAs or 2-methyl-and 4-methyl-branched acyl-CoAs. In Bos taurus (Bovine), this protein is Phytanoyl-CoA dioxygenase, peroxisomal (PHYH).